Reading from the N-terminus, the 152-residue chain is Non-specific lipid transfer protein GPI-anchored 8 (152 aa).

The N-terminal stretch at 1–23 (MNITRILGVVTTVVILYSVQVTA) is a signal peptide. 3 cysteine pairs are disulfide-bonded: C42–C56, C57–C98, and C70–C107. N-linked (GlcNAc...) asparagine glycosylation occurs at N108. S124 carries GPI-anchor amidated serine lipidation. Positions 125–152 (GNSFSTKKNTALAITFFGFSFVFLGMII) are cleaved as a propeptide — removed in mature form.

It belongs to the plant LTP family.

It is found in the cell membrane. In terms of biological role, probable lipid transfer protein. The protein is Non-specific lipid transfer protein GPI-anchored 8 of Arabidopsis thaliana (Mouse-ear cress).